A 699-amino-acid chain; its full sequence is MDLKFATFSSEIELPFYSALFSSKLDHDKLDSSARPVLGLYEPRSHASPEASTRMQILGSALTSDQDESGPLGMTRAEGYIKNVNTIEEFKNTDKNAMIKKAGEQIWDAIQDGTIYSCPSLLASFRILSYADLKKYKFTYWFAFPALHSEPQWKRTGPIGRLTSDESTALVERIGTWRYMVDRREHGFFLAKKVRREAAGPRSSLDDPGVDIGYRWDIGSLRDFETGFFNDAAEEDRYVAFVDPSNYPEYPSWPLRNLLILIRQRYRLNKVQILCYRDTQPRRHEARSTILPLAMDQVGDVELKCMPKVTGWERNGNGDLRPRVANLAEYMDPTRLADQAVDLNLKLMKWRLAPNLDLDAIKNTKCLLLGAGTLGSYVSRNLLGWGVRKITFIDYGSVSYSNPVRQPLFKFEDCHNGGKPKAIQAAEALKEIYPGVDVEGYALSVPMLDHAIHNEAKTKADFDKLKELIDSHDAIFLLMDTRESRWLPTLMGKAANKIVMNAALGFDTYVVMRHGAAPNDGSEETLGCYFCNDVVVAADSMKDQTLDQQCTVTRPGVAAIASALLVELLTSILQHPLKQHAPAPVSTGTGSAVSYERDPPDHPLGLVPHQVRGFLSNFQNMVIRGKSYPQCSACSKPILDAYKEGGWEFVKTALASRDYVAELSGLAEVQRLAEKAAAEMQWSEDEEGMDEEEGEGELI.

The GXGXXG motif motif lies at Gly370–Gly375. The Glycyl thioester intermediate role is filled by Cys550. Residues Met680–Ile699 are disordered. Positions Trp682 to Ile699 are enriched in acidic residues.

The protein belongs to the ATG7 family. As to quaternary structure, homodimer.

The protein resides in the cytoplasm. Its subcellular location is the preautophagosomal structure. E1-like activating enzyme involved in the 2 ubiquitin-like systems required for cytoplasm to vacuole transport (Cvt) and autophagy. Activates atg12 for its conjugation with apg-4/atg5 and apg-6/atg8 for its conjugation with phosphatidylethanolamine. Both systems are needed for the apg-6/atg8 association to Cvt vesicles and autophagosomes membranes. Autophagy is essential for maintenance of amino acid levels and protein synthesis under nitrogen starvation. Required for selective autophagic degradation of the nucleus (nucleophagy) as well as for mitophagy which contributes to regulate mitochondrial quantity and quality by eliminating the mitochondria to a basal level to fulfill cellular energy requirements and preventing excess ROS production. Plays a role in the regulation of filamentous growth and chronological longevity. This Neurospora crassa (strain ATCC 24698 / 74-OR23-1A / CBS 708.71 / DSM 1257 / FGSC 987) protein is Ubiquitin-like modifier-activating enzyme atg7 (apg-5).